The following is a 234-amino-acid chain: Ribose-5-phosphate isomerase A (234 aa).

Substrate contacts are provided by residues 39-42, 92-95, and 105-108; these read TGST, DGAD, and KGGG. The active-site Proton acceptor is the glutamate 114. Lysine 132 serves as a coordination point for substrate.

It belongs to the ribose 5-phosphate isomerase family. Homodimer.

The catalysed reaction is aldehydo-D-ribose 5-phosphate = D-ribulose 5-phosphate. It participates in carbohydrate degradation; pentose phosphate pathway; D-ribose 5-phosphate from D-ribulose 5-phosphate (non-oxidative stage): step 1/1. Functionally, catalyzes the reversible conversion of ribose-5-phosphate to ribulose 5-phosphate. This chain is Ribose-5-phosphate isomerase A, found in Albidiferax ferrireducens (strain ATCC BAA-621 / DSM 15236 / T118) (Rhodoferax ferrireducens).